Consider the following 691-residue polypeptide: DNA-directed RNA polymerase subunit beta' (691 aa).

The Zn(2+) site is built by Cys-69, Cys-71, Cys-87, and Cys-90. Asp-489, Asp-491, and Asp-493 together coordinate Mg(2+).

This sequence belongs to the RNA polymerase beta' chain family. RpoC1 subfamily. In plastids the minimal PEP RNA polymerase catalytic core is composed of four subunits: alpha, beta, beta', and beta''. When a (nuclear-encoded) sigma factor is associated with the core the holoenzyme is formed, which can initiate transcription. Requires Mg(2+) as cofactor. The cofactor is Zn(2+).

It localises to the plastid. The protein localises to the chloroplast. It catalyses the reaction RNA(n) + a ribonucleoside 5'-triphosphate = RNA(n+1) + diphosphate. In terms of biological role, DNA-dependent RNA polymerase catalyzes the transcription of DNA into RNA using the four ribonucleoside triphosphates as substrates. The polypeptide is DNA-directed RNA polymerase subunit beta' (Jasminum nudiflorum (Winter jasmine)).